Here is a 360-residue protein sequence, read N- to C-terminus: ELAV-like protein 2 (360 aa).

The tract at residues 1–36 (METQLSNGPTCNNTANGPTTVNNNCSSPVDSGNTED) is disordered. RRM domains follow at residues 39–117 (TNLI…YARP) and 125–205 (ANLY…FANN). Ser221 carries the post-translational modification Phosphoserine. The RRM 3 domain occupies 277 to 355 (WCIFVYNLAP…RVLQVSFKTN (79 aa)).

It belongs to the RRM elav family. In terms of assembly, interacts with IGF2BP1. Interacts with MAP1B light chain LC1. As to expression, brain; neural-specific. Expressed in the hippocampus.

RNA-binding protein that binds to the 3' untranslated region (3'UTR) of target mRNAs. Seems to recognize a GAAA motif. Can bind to its own 3'UTR, the FOS 3'UTR and the ID 3'UTR. This is ELAV-like protein 2 (Elavl2) from Mus musculus (Mouse).